The chain runs to 704 residues: Eukaryotic translation initiation factor 2-alpha kinase 1 (704 aa).

One can recognise a Protein kinase domain in the interval 224–667 (FEELELLGKG…LTSNLFHDLV (444 aa)). Residues 230–238 (LGKGGYGSV) and Lys253 contribute to the ATP site. Asp491 (proton acceptor) is an active-site residue.

Belongs to the protein kinase superfamily. Ser/Thr protein kinase family. GCN2 subfamily. Post-translationally, autophosphorylated.

It catalyses the reaction L-seryl-[protein] + ATP = O-phospho-L-seryl-[protein] + ADP + H(+). The catalysed reaction is L-threonyl-[protein] + ATP = O-phospho-L-threonyl-[protein] + ADP + H(+). Functionally, mediates down-regulation of protein synthesis in response to stress conditions by the phosphorylation of the alpha subunit of eIF-2 (tif211) on 'Ser-52'. Protein synthesis is inhibited at the level of initiation. Activity is inhibited in the presence of heme. The chain is Eukaryotic translation initiation factor 2-alpha kinase 1 (hri1) from Schizosaccharomyces pombe (strain 972 / ATCC 24843) (Fission yeast).